A 144-amino-acid chain; its full sequence is MTSLSAKDKDVVKAFWAKISSKATDIGADALGRMLVVYPQTKTYFAHWKDLSPGSAPVKKHGQTVMGGVAEAVGKIDNLTAGLLNLSELHAFTLRVDPANFKILSHNILVVLAIMFPNDFTPEVHVAMDKFLAALALALAEKYR.

In terms of domain architecture, Globin spans 3 to 144 (SLSAKDKDVV…LALALAEKYR (142 aa)). His-61 contacts O2. His-90 is a heme b binding site.

This sequence belongs to the globin family. In terms of assembly, heterotetramer of two alpha chains and two beta chains. Red blood cells.

In terms of biological role, involved in oxygen transport from gills to the various peripheral tissues. In Oryzias latipes (Japanese rice fish), this protein is Hemoglobin embryonic subunit alpha.